We begin with the raw amino-acid sequence, 375 residues long: Queuine tRNA-ribosyltransferase (375 aa).

Residue Asp89 is the Proton acceptor of the active site. Substrate contacts are provided by residues 89–93 (DSGGF), Asp143, Gln187, and Gly214. Residues 245–251 (GVGKPED) are RNA binding. The Nucleophile role is filled by Asp264. Residues 269–273 (TRNAR) are RNA binding; important for wobble base 34 recognition. 4 residues coordinate Zn(2+): Cys302, Cys304, Cys307, and His333.

This sequence belongs to the queuine tRNA-ribosyltransferase family. In terms of assembly, homodimer. Within each dimer, one monomer is responsible for RNA recognition and catalysis, while the other monomer binds to the replacement base PreQ1. Requires Zn(2+) as cofactor.

It carries out the reaction 7-aminomethyl-7-carbaguanine + guanosine(34) in tRNA = 7-aminomethyl-7-carbaguanosine(34) in tRNA + guanine. It participates in tRNA modification; tRNA-queuosine biosynthesis. Functionally, catalyzes the base-exchange of a guanine (G) residue with the queuine precursor 7-aminomethyl-7-deazaguanine (PreQ1) at position 34 (anticodon wobble position) in tRNAs with GU(N) anticodons (tRNA-Asp, -Asn, -His and -Tyr). Catalysis occurs through a double-displacement mechanism. The nucleophile active site attacks the C1' of nucleotide 34 to detach the guanine base from the RNA, forming a covalent enzyme-RNA intermediate. The proton acceptor active site deprotonates the incoming PreQ1, allowing a nucleophilic attack on the C1' of the ribose to form the product. After dissociation, two additional enzymatic reactions on the tRNA convert PreQ1 to queuine (Q), resulting in the hypermodified nucleoside queuosine (7-(((4,5-cis-dihydroxy-2-cyclopenten-1-yl)amino)methyl)-7-deazaguanosine). The chain is Queuine tRNA-ribosyltransferase from Aliivibrio salmonicida (strain LFI1238) (Vibrio salmonicida (strain LFI1238)).